The sequence spans 107 residues: MSVVIRLARAGTKKRPFYHVVVADSRFPRDGRFIERLGYFNPLMAKDNEARLKLDLDKVKDWLAKGAQPSDRVARFLDTAGIKKREARNNPEKAVPRKERKAAEAGK.

Residues 85–107 form a disordered region; the sequence is REARNNPEKAVPRKERKAAEAGK.

The protein belongs to the bacterial ribosomal protein bS16 family.

The chain is Small ribosomal subunit protein bS16 from Rhodopseudomonas palustris (strain BisB5).